The chain runs to 516 residues: MSTSAMELLLTATIFCLVLWVVRIFRPQVPKGLKSPPGPWGWPLIGHMLTLGKNPHLALTRLSARYGDVLQIRIGSTPVVVLSGLDTIRQALVRQGDDFKGRPDLYSFTFISDGQSMTFNPDSGPVWAARRRLAQSALKSFSVASDPASVSSCYLEEHVKKEAEYLIKKFQELMAGPGHFDPYRYVVVSVANVISAICFGQRYSHDDQQLLELIDLNNEFGEVTGSGNPSDFIPILRYLPSATMDTFKDLNRRFSVFIQKMIKEHYKTFEKGHIRDITDSLIEHCQDRKLDKNANIQISDQKIIGIVLDLFGAGFDTITTAISWSLLYLVMNPRIQKKIQEELDTVIGRERQPQLADRPKLPYMEAFISEVFRYSSFMPFTIPHSTTKDTSLNGFYIPKGCCIFVNQWQINHDQKLWGDPSVFRPERFLSPDGTVDKALSEKVTIFGLGKRRCLGEVIGRWEVFLFLAILLQQLEFSTSPGVKIDMTPIYGLTMKYSRCEHFQAQTRPFVLKCPEA.

The mitochondrial targeting signal stretch occupies residues 25–36; sequence FRPQVPKGLKSP. Residue Ser63 is glycosylated (O-linked (GlcNAc) serine). Substrate is bound at residue Phe220. Cys453 is a binding site for heme.

The protein belongs to the cytochrome P450 family. As to quaternary structure, interacts with cytosolic chaperones HSP70 and HSP90; this interaction is required for initial targeting to mitochondria. Interacts (via mitochondrial targeting signal) with TOMM40 (via N-terminus); this interaction is required for translocation across the mitochondrial outer membrane. It depends on heme as a cofactor. Constitutively expressed in liver.

The protein localises to the endoplasmic reticulum membrane. The protein resides in the mitochondrion inner membrane. It is found in the microsome membrane. It localises to the cytoplasm. The enzyme catalyses an organic molecule + reduced [NADPH--hemoprotein reductase] + O2 = an alcohol + oxidized [NADPH--hemoprotein reductase] + H2O + H(+). It carries out the reaction estrone + reduced [NADPH--hemoprotein reductase] + O2 = 2-hydroxyestrone + oxidized [NADPH--hemoprotein reductase] + H2O + H(+). The catalysed reaction is estrone + reduced [NADPH--hemoprotein reductase] + O2 = 4-hydroxyestrone + oxidized [NADPH--hemoprotein reductase] + H2O + H(+). It catalyses the reaction estrone + reduced [NADPH--hemoprotein reductase] + O2 = 6alpha-hydroxyestrone + oxidized [NADPH--hemoprotein reductase] + H2O + H(+). The enzyme catalyses estrone + reduced [NADPH--hemoprotein reductase] + O2 = 15alpha-hydroxyestrone + oxidized [NADPH--hemoprotein reductase] + H2O + H(+). It carries out the reaction estrone + reduced [NADPH--hemoprotein reductase] + O2 = 16alpha-hydroxyestrone + oxidized [NADPH--hemoprotein reductase] + H2O + H(+). The catalysed reaction is 17beta-estradiol + reduced [NADPH--hemoprotein reductase] + O2 = 2-hydroxy-17beta-estradiol + oxidized [NADPH--hemoprotein reductase] + H2O + H(+). It catalyses the reaction 17beta-estradiol + reduced [NADPH--hemoprotein reductase] + O2 = 4-hydroxy-17beta-estradiol + oxidized [NADPH--hemoprotein reductase] + H2O + H(+). The enzyme catalyses 17beta-estradiol + reduced [NADPH--hemoprotein reductase] + O2 = 6alpha-hydroxy-17beta-estradiol + oxidized [NADPH--hemoprotein reductase] + H2O + H(+). It carries out the reaction 17beta-estradiol + reduced [NADPH--hemoprotein reductase] + O2 = 7alpha-hydroxy-17beta-estradiol + oxidized [NADPH--hemoprotein reductase] + H2O + H(+). The catalysed reaction is 17beta-estradiol + reduced [NADPH--hemoprotein reductase] + O2 = 15alpha-hydroxy-17beta-estradiol + oxidized [NADPH--hemoprotein reductase] + H2O + H(+). It catalyses the reaction (5Z,8Z,11Z)-eicosatrienoate + reduced [NADPH--hemoprotein reductase] + O2 = 19-hydroxy-(5Z,8Z,11Z)-eicosatrienoate + oxidized [NADPH--hemoprotein reductase] + H2O + H(+). The enzyme catalyses (5Z,8Z,11Z,14Z)-eicosatetraenoate + reduced [NADPH--hemoprotein reductase] + O2 = 16-hydroxy-(5Z,8Z,11Z,14Z)-eicosatetraenoate + oxidized [NADPH--hemoprotein reductase] + H2O + H(+). It carries out the reaction (5Z,8Z,11Z,14Z)-eicosatetraenoate + reduced [NADPH--hemoprotein reductase] + O2 = 17-hydroxy-(5Z,8Z,11Z,14Z)-eicosatetraenoate + oxidized [NADPH--hemoprotein reductase] + H2O + H(+). The catalysed reaction is (5Z,8Z,11Z,14Z)-eicosatetraenoate + reduced [NADPH--hemoprotein reductase] + O2 = 18-hydroxy-(5Z,8Z,11Z,14Z)-eicosatetraenoate + oxidized [NADPH--hemoprotein reductase] + H2O + H(+). It catalyses the reaction (5Z,8Z,11Z,14Z)-eicosatetraenoate + reduced [NADPH--hemoprotein reductase] + O2 = 19-hydroxy-(5Z,8Z,11Z,14Z)-eicosatetraenoate + oxidized [NADPH--hemoprotein reductase] + H2O + H(+). The enzyme catalyses (5Z,8Z,11Z,14Z,17Z)-eicosapentaenoate + reduced [NADPH--hemoprotein reductase] + O2 = 19-hydroxy-(5Z,8Z,11Z,14Z,17Z)-eicosapentaenoate + oxidized [NADPH--hemoprotein reductase] + H2O + H(+). It carries out the reaction (5Z,8Z,11Z,14Z)-eicosatetraenoate + reduced [NADPH--hemoprotein reductase] + O2 = (8R,9S)-epoxy-(5Z,11Z,14Z)-eicosatrienoate + oxidized [NADPH--hemoprotein reductase] + H2O + H(+). The catalysed reaction is (5Z,8Z,11Z,14Z)-eicosatetraenoate + reduced [NADPH--hemoprotein reductase] + O2 = (11R,12S)-epoxy-(5Z,8Z,14Z)-eicosatrienoate + oxidized [NADPH--hemoprotein reductase] + H2O + H(+). It catalyses the reaction (5Z,8Z,11Z,14Z)-eicosatetraenoate + reduced [NADPH--hemoprotein reductase] + O2 = (14S,15R)-epoxy-(5Z,8Z,11Z)-eicosatrienoate + oxidized [NADPH--hemoprotein reductase] + H2O + H(+). The enzyme catalyses (5Z,8Z,11Z,14Z)-eicosatetraenoate + reduced [NADPH--hemoprotein reductase] + O2 = (14R,15S)-epoxy-(5Z,8Z,11Z)-eicosatrienoate + oxidized [NADPH--hemoprotein reductase] + H2O + H(+). It carries out the reaction (5Z,8Z,11Z,14Z,17Z)-eicosapentaenoate + reduced [NADPH--hemoprotein reductase] + O2 = (17R,18S)-epoxy-(5Z,8Z,11Z,14Z)-eicosatetraenoate + oxidized [NADPH--hemoprotein reductase] + H2O + H(+). The catalysed reaction is (4Z,7Z,10Z,13Z,16Z,19Z)-docosahexaenoate + reduced [NADPH--hemoprotein reductase] + O2 = (19S,20R)-epoxy-(4Z,7Z,10Z,13Z,16Z)-docosapentaenoate + oxidized [NADPH--hemoprotein reductase] + H2O + H(+). It catalyses the reaction (4Z,7Z,10Z,13Z,16Z,19Z)-docosahexaenoate + reduced [NADPH--hemoprotein reductase] + O2 = (19R,20S)-epoxy-(4Z,7Z,10Z,13Z,16Z)-docosapentaenoate + oxidized [NADPH--hemoprotein reductase] + H2O + H(+). The enzyme catalyses all-trans-retinol + reduced [NADPH--hemoprotein reductase] + O2 = all-trans-retinal + oxidized [NADPH--hemoprotein reductase] + 2 H2O + H(+). It carries out the reaction all-trans-retinal + reduced [NADPH--hemoprotein reductase] + O2 = all-trans-retinoate + oxidized [NADPH--hemoprotein reductase] + H2O + 2 H(+). The catalysed reaction is (13S)-hydroperoxy-(9Z,11E)-octadecadienoate = 13-oxo-(9Z,11E)-octadecadienoate + H2O. It catalyses the reaction (12S)-hydroperoxy-(5Z,8Z,10E,14Z)-eicosatetraenoate = 12-oxo-(5Z,8Z,10E,14Z)-eicosatetraenoate + H2O. The enzyme catalyses (15S)-hydroperoxy-(5Z,8Z,11Z,13E)-eicosatetraenoate = 15-oxo-(5Z,8Z,11Z,13E)-eicosatetraenoate + H2O. It carries out the reaction (5S)-hydroperoxy-(6E,8Z,11Z,14Z)-eicosatetraenoate = 5-oxo-(6E,8Z,11Z,14Z)-eicosatetraenoate + H2O. The protein operates within steroid hormone biosynthesis. It participates in lipid metabolism; fatty acid metabolism. It functions in the pathway cofactor metabolism; retinol metabolism. Its function is as follows. A cytochrome P450 monooxygenase involved in the metabolism of various endogenous substrates, including fatty acids, steroid hormones and vitamins. Mechanistically, uses molecular oxygen inserting one oxygen atom into a substrate, and reducing the second into a water molecule, with two electrons provided by NADPH via cytochrome P450 reductase (CPR; NADPH-ferrihemoprotein reductase). Catalyzes the hydroxylation of carbon-hydrogen bonds. Exhibits high catalytic activity for the formation of hydroxyestrogens from estrone (E1) and 17beta-estradiol (E2), namely 2-hydroxy E1 and E2, as well as D-ring hydroxylated E1 and E2 at the C15alpha and C16alpha positions. Displays different regioselectivities for polyunsaturated fatty acids (PUFA) hydroxylation. Catalyzes the epoxidation of double bonds of certain PUFA. Converts arachidonic acid toward epoxyeicosatrienoic acid (EET) regioisomers, 8,9-, 11,12-, and 14,15-EET, that function as lipid mediators in the vascular system. Displays an absolute stereoselectivity in the epoxidation of eicosapentaenoic acid (EPA) producing the 17(R),18(S) enantiomer. May play an important role in all-trans retinoic acid biosynthesis in extrahepatic tissues. Catalyzes two successive oxidative transformation of all-trans retinol to all-trans retinal and then to the active form all-trans retinoic acid. May also participate in eicosanoids metabolism by converting hydroperoxide species into oxo metabolites (lipoxygenase-like reaction, NADPH-independent). The polypeptide is Cytochrome P450 1A1 (CYP1A1) (Cavia porcellus (Guinea pig)).